A 324-amino-acid polypeptide reads, in one-letter code: Anthranilate phosphoribosyltransferase (324 aa).

5-phospho-alpha-D-ribose 1-diphosphate contacts are provided by residues Gly72, 75 to 76, Thr80, 82 to 85, 99 to 107, and Ser111; these read GD, NVST, and KHGNVSVTS. Gly72 serves as a coordination point for anthranilate. Ser84 lines the Mg(2+) pocket. Asn102 is an anthranilate binding site. Residue Arg157 coordinates anthranilate. Mg(2+)-binding residues include Asp215 and Glu216.

Belongs to the anthranilate phosphoribosyltransferase family. As to quaternary structure, homodimer. Mg(2+) is required as a cofactor.

It carries out the reaction N-(5-phospho-beta-D-ribosyl)anthranilate + diphosphate = 5-phospho-alpha-D-ribose 1-diphosphate + anthranilate. Its pathway is amino-acid biosynthesis; L-tryptophan biosynthesis; L-tryptophan from chorismate: step 2/5. Catalyzes the transfer of the phosphoribosyl group of 5-phosphorylribose-1-pyrophosphate (PRPP) to anthranilate to yield N-(5'-phosphoribosyl)-anthranilate (PRA). The protein is Anthranilate phosphoribosyltransferase of Pyrococcus furiosus (strain ATCC 43587 / DSM 3638 / JCM 8422 / Vc1).